The chain runs to 161 residues: UPF0506 protein SJCHGC02965 (161 aa).

Positions 1 to 13 are cleaved as a signal peptide; it reads QLLILCLVTVINS. Residues Asn-15, Asn-19, Asn-31, Asn-43, Asn-47, Asn-59, Asn-63, Asn-75, and Asn-121 are each glycosylated (N-linked (GlcNAc...) asparagine). Intrachain disulfides connect Cys-127-Cys-141, Cys-134-Cys-145, and Cys-140-Cys-150.

This sequence belongs to the UPF0506 family.

It is found in the secreted. The protein is UPF0506 protein SJCHGC02965 of Schistosoma japonicum (Blood fluke).